We begin with the raw amino-acid sequence, 178 residues long: Translation initiation factor IF-3 (178 aa).

It belongs to the IF-3 family. In terms of assembly, monomer.

It is found in the cytoplasm. Functionally, IF-3 binds to the 30S ribosomal subunit and shifts the equilibrium between 70S ribosomes and their 50S and 30S subunits in favor of the free subunits, thus enhancing the availability of 30S subunits on which protein synthesis initiation begins. In Ralstonia nicotianae (strain ATCC BAA-1114 / GMI1000) (Ralstonia solanacearum), this protein is Translation initiation factor IF-3.